The primary structure comprises 232 residues: Uracil phosphoribosyltransferase (232 aa).

GTP is bound at residue 38–42 (KGLVK). 5-phospho-alpha-D-ribose 1-diphosphate contacts are provided by residues R87, R112, and 140–148 (DPMIATGST). Uracil-binding positions include I204 and 209-211 (GDA). D210 provides a ligand contact to 5-phospho-alpha-D-ribose 1-diphosphate.

It belongs to the UPRTase family. It depends on Mg(2+) as a cofactor.

It catalyses the reaction UMP + diphosphate = 5-phospho-alpha-D-ribose 1-diphosphate + uracil. The protein operates within pyrimidine metabolism; UMP biosynthesis via salvage pathway; UMP from uracil: step 1/1. Allosterically activated by GTP. Its function is as follows. Catalyzes the conversion of uracil and 5-phospho-alpha-D-ribose 1-diphosphate (PRPP) to UMP and diphosphate. The protein is Uracil phosphoribosyltransferase of Pyrococcus furiosus (strain ATCC 43587 / DSM 3638 / JCM 8422 / Vc1).